The sequence spans 291 residues: MASLKDMRVRIASTKATQKITKAMQMVAASKLRRAQMAAEAARPYAEKMDSVISNIAGAAAGSPGAPVLLAGTGKDQVHLLLVCTGERGLSGAFNSSIVRLARERAYALMNQGKEVKFFCVGRKGYEQLRRTFDKQIIENLELRSVRQLGFVNAEDIAKKVIARFNAGEFDVCTLFYSRFKSVISQIPTAQQLIPLVVEAPAAGSVATSYEYEPEEDEILSTLLPRNLAVQIFRALLENNASFYGAQMSAMDNATRNAGDMIRKQTLIYNRTRQAMITKELIEIISGAEAI.

It belongs to the ATPase gamma chain family. In terms of assembly, F-type ATPases have 2 components, CF(1) - the catalytic core - and CF(0) - the membrane proton channel. CF(1) has five subunits: alpha(3), beta(3), gamma(1), delta(1), epsilon(1). CF(0) has three main subunits: a, b and c.

It localises to the cell inner membrane. Its function is as follows. Produces ATP from ADP in the presence of a proton gradient across the membrane. The gamma chain is believed to be important in regulating ATPase activity and the flow of protons through the CF(0) complex. The protein is ATP synthase gamma chain of Rhodopseudomonas palustris (strain HaA2).